Consider the following 86-residue polypeptide: Small ribosomal subunit protein bS20 (86 aa).

The segment at 1–22 (MANIASARKRARQAEKNRQHNM) is disordered.

This sequence belongs to the bacterial ribosomal protein bS20 family.

Its function is as follows. Binds directly to 16S ribosomal RNA. This is Small ribosomal subunit protein bS20 from Thioalkalivibrio sulfidiphilus (strain HL-EbGR7).